Consider the following 424-residue polypeptide: Enolase (424 aa).

Q162 contacts (2R)-2-phosphoglycerate. E204 serves as the catalytic Proton donor. Mg(2+) contacts are provided by D241, E284, and D311. Residues K336, R365, S366, and K387 each coordinate (2R)-2-phosphoglycerate. The active-site Proton acceptor is the K336.

The protein belongs to the enolase family. Requires Mg(2+) as cofactor.

The protein localises to the cytoplasm. It is found in the secreted. The protein resides in the cell surface. It catalyses the reaction (2R)-2-phosphoglycerate = phosphoenolpyruvate + H2O. It participates in carbohydrate degradation; glycolysis; pyruvate from D-glyceraldehyde 3-phosphate: step 4/5. Catalyzes the reversible conversion of 2-phosphoglycerate (2-PG) into phosphoenolpyruvate (PEP). It is essential for the degradation of carbohydrates via glycolysis. The protein is Enolase of Rhizobium etli (strain ATCC 51251 / DSM 11541 / JCM 21823 / NBRC 15573 / CFN 42).